A 444-amino-acid polypeptide reads, in one-letter code: Phosphoglucosamine mutase (444 aa).

Ser102 (phosphoserine intermediate) is an active-site residue. Positions 102, 241, 243, and 245 each coordinate Mg(2+). Ser102 carries the phosphoserine modification.

This sequence belongs to the phosphohexose mutase family. Requires Mg(2+) as cofactor. Activated by phosphorylation.

It carries out the reaction alpha-D-glucosamine 1-phosphate = D-glucosamine 6-phosphate. Its function is as follows. Catalyzes the conversion of glucosamine-6-phosphate to glucosamine-1-phosphate. The polypeptide is Phosphoglucosamine mutase (Paracidovorax citrulli (strain AAC00-1) (Acidovorax citrulli)).